A 254-amino-acid chain; its full sequence is GTP cyclohydrolase III (254 aa).

Belongs to the archaeal-type GTP cyclohydrolase family.

It carries out the reaction GTP + 3 H2O = 2-amino-5-formylamino-6-(5-phospho-D-ribosylamino)pyrimidin-4(3H)-one + 2 phosphate + 2 H(+). Functionally, catalyzes the formation of 2-amino-5-formylamino-6-ribofuranosylamino-4(3H)-pyrimidinone ribonucleotide monophosphate and inorganic phosphate from GTP. Also has an independent pyrophosphate phosphohydrolase activity. In Methanobrevibacter smithii (strain ATCC 35061 / DSM 861 / OCM 144 / PS), this protein is GTP cyclohydrolase III.